The sequence spans 158 residues: C-type lectin lectoxin-Enh7 (158 aa).

Residues 1–23 (MGQFTVVSLGLLAVFLSLSGAKG) form the signal peptide. Cystine bridges form between Cys26/Cys37, Cys54/Cys154, and Cys129/Cys146. The 123-residue stretch at 33–155 (RNGVCNKLFP…CASLHPFICQ (123 aa)) folds into the C-type lectin domain. The short motif at 119–121 (EPN) is the Mannose-binding element. Residues Glu127, Asn142, and Asp143 each coordinate Ca(2+).

This sequence belongs to the true venom lectin family. In terms of tissue distribution, expressed by the venom gland.

It localises to the secreted. Functionally, mannose-binding lectin which recognizes specific carbohydrate structures and agglutinates a variety of animal cells by binding to cell-surface glycoproteins and glycolipids. May be a calcium-dependent lectin. The protein is C-type lectin lectoxin-Enh7 of Pseudoferania polylepis (Macleay's water snake).